We begin with the raw amino-acid sequence, 319 residues long: Probable cell division protein WhiA (319 aa).

Positions 277-310 (SLEELGKLAEPAMTKDAIAGRIRRLLCLADKRAK) form a DNA-binding region, H-T-H motif.

It belongs to the WhiA family.

In terms of biological role, involved in cell division and chromosome segregation. In Tropheryma whipplei (strain Twist) (Whipple's bacillus), this protein is Probable cell division protein WhiA.